A 126-amino-acid chain; its full sequence is MPSQDKEIDKIFLIGAGGFLGAVCRFLLCELVEGQLGILSVNVIGSFMLGMIMYDTEYLGFIGPKGKIAFGTGFMGAFTTFSTFAVQSFSLPFIPALGNISANIFLTLTGVFFGRSVIKALSSREI.

4 consecutive transmembrane segments (helical) span residues 11–31 (IFLI…LCEL), 34–54 (GQLG…MIMY), 66–86 (GKIA…TFAV), and 93–113 (FIPA…GVFF). Residues glycine 76 and threonine 79 each coordinate Na(+).

This sequence belongs to the fluoride channel Fluc/FEX (TC 1.A.43) family.

The protein localises to the cell membrane. It catalyses the reaction fluoride(in) = fluoride(out). Na(+) is not transported, but it plays an essential structural role and its presence is essential for fluoride channel function. Its function is as follows. Fluoride-specific ion channel. Important for reducing fluoride concentration in the cell, thus reducing its toxicity. This Methanosarcina acetivorans (strain ATCC 35395 / DSM 2834 / JCM 12185 / C2A) protein is Fluoride-specific ion channel FluC 2.